Consider the following 737-residue polypeptide: MGDRGARPGRLMPMLALLSWAAGLGVAEETPGRIPADKLLVITVATKENDGFHRFMNSAKYFNYTVKVLGQGQEWRGGDGMNSIGGGQKVRLLKEAMEHYASQEDLVILFTECFDVVFAGGPEEVLKKFQKTNHKIVFAADGLLWPDKRLADKYPVVHIGKRYLNSGGFIGYAPYISRLVQQWNLQDNDDDQLFYTKVYIDPLKREAFNITLDHKCKIFQALNGATDEVVLKFENGKSRVKNTFYETLPVAINGNGPTKILLNYFGNYVPNSWTQENGCALCDVDTIDLSTVDVPPKVTLGVFIEQPTPFLPRFLNLLLTLDYPKEALQLFIHNKEVYHEKDIKVFVDKAKHDISSIKIVGPEENLSQAEARNMGMDFCRQDEKCDYYFSVDADVVLTNPRTLKFLIEQNRKIIAPLVTRHGKLWSNFWGALSPDGYYARSEDYVDIVQGNRVGIWNVPYMANVYLIQGKTLRSEMNERNYFVRDKLDPDMALCRNARDMGVFMYISNRHEFGRLISTANYNTSHLNNDFWQIFENPVDWKEKYINRDYSKIFTENIVEQPCPDVFWFPIFSERACDELVEEMEHYGKWSGGKHHDSRISGGYENVPTDDIHMKQIGLENVWLHFIREFIAPVTLKVFAGYYTKGFALLNFVVKYSPERQRSLRPHHDASTFTINIALNNVGEDFQGGGCKFLRYNCSIESPRKGWSFMHPGRLTHLHEGLPVKNGTRYIAVSFIDP.

Residues 1-25 form the signal peptide; sequence MGDRGARPGRLMPMLALLSWAAGLG. N-linked (GlcNAc...) asparagine glycans are attached at residues N63 and N209. The residue at position 320 (T320) is a Phosphothreonine. Y323 carries the phosphotyrosine modification. N365 and N522 each carry an N-linked (GlcNAc...) asparagine glycan. The Fe2OG dioxygenase domain maps to 644–737; it reads KGFALLNFVV…RYIAVSFIDP (94 aa). Fe cation contacts are provided by H666 and D668. N696 carries an N-linked (GlcNAc...) asparagine glycan. N6-succinyllysine is present on K704. H718 lines the Fe cation pocket. N-linked (GlcNAc...) asparagine glycosylation occurs at N725. Residue R728 is part of the active site.

In terms of assembly, homodimer. Fe(2+) is required as a cofactor. L-ascorbate serves as cofactor. Is highly expressed in the heart, lung, kidney, eye, ovary and placenta.

It is found in the rough endoplasmic reticulum membrane. It carries out the reaction L-lysyl-[collagen] + 2-oxoglutarate + O2 = (5R)-5-hydroxy-L-lysyl-[collagen] + succinate + CO2. Functionally, forms hydroxylysine residues in -Xaa-Lys-Gly- sequences in collagens. These hydroxylysines serve as sites of attachment for carbohydrate units and are essential for the stability of the intermolecular collagen cross-links. The protein is Procollagen-lysine,2-oxoglutarate 5-dioxygenase 2 (Plod2) of Mus musculus (Mouse).